Consider the following 185-residue polypeptide: TATA-box-binding protein (185 aa).

Repeat copies occupy residues 3-78 (IQNI…REDL) and 94-176 (IQNI…AEKI).

This sequence belongs to the TBP family.

Functionally, general factor that plays a role in the activation of archaeal genes transcribed by RNA polymerase. Binds specifically to the TATA box promoter element which lies close to the position of transcription initiation. In Methanopyrus kandleri (strain AV19 / DSM 6324 / JCM 9639 / NBRC 100938), this protein is TATA-box-binding protein.